The sequence spans 591 residues: Inactive metallocarboxypeptidase ECM14 (591 aa).

A signal peptide spans 1–21 (MRLFARLEVLAILACAVPIAA). Positions 22 to 175 (IPSFLSNSYP…QTIYESYPSS (154 aa)) are excised as a propeptide. In terms of domain architecture, Peptidase M14 spans 203–523 (DYQPFSVIVT…NAVMVLGRFL (321 aa)). Zn(2+) contacts are provided by His265 and Glu268. Substrate contacts are provided by residues 265-268 (HARE), Arg323, and 340-341 (DR). Residues Cys334 and Cys357 are joined by a disulfide bond. Residues Asn350 and Asn381 are each glycosylated (N-linked (GlcNAc...) asparagine). Residue His397 participates in Zn(2+) binding. A substrate-binding site is contributed by 398 to 399 (SY). A compositionally biased stretch (basic and acidic residues) spans 533–543 (DWEDESQRPKA). A disordered region spans residues 533–591 (DWEDESQRPKADEDDIPSENELGENDDSWIPFDYRNHDDQNEGEGYDNDEWGFRRRRKG). Acidic residues-rich tracts occupy residues 544–559 (DEDD…ENDD) and 573–582 (NEGEGYDNDE).

It belongs to the peptidase M14 family. The cofactor is Zn(2+).

The protein resides in the vacuole. Its subcellular location is the secreted. Functionally, inactive carboxypeptidase that may play a role in cell wall organization and biogenesis. In Paracoccidioides lutzii (strain ATCC MYA-826 / Pb01) (Paracoccidioides brasiliensis), this protein is Inactive metallocarboxypeptidase ECM14 (ECM14).